A 213-amino-acid polypeptide reads, in one-letter code: uncharacterized protein (213 aa).

Coiled coils occupy residues 54 to 78 (KEQT…NLKL) and 108 to 151 (VKDV…STSK). The segment covering 122 to 142 (IEKEKEEEKAAKKAEKAEEKK) has biased composition (basic and acidic residues). Positions 122 to 213 (IEKEKEEEKA…FGGKPTGQIW (92 aa)) are disordered. Residues 146-188 (KNSTSKSGSKSSKSSSGSSKSSSKSSKSSKSSSGSSKSSSKSS) show a composition bias toward low complexity. Over residues 189 to 199 (KNSKKSSKKSN) the composition is skewed to basic residues.

It belongs to the mimivirus R546 family.

This is an uncharacterized protein from Acanthamoeba polyphaga (Amoeba).